We begin with the raw amino-acid sequence, 725 residues long: Sodium/hydrogen exchanger 7 (725 aa).

Residues 1 to 20 form a disordered region; that stretch reads MEPGDAARPGSGRATGAPPP. The Cytoplasmic portion of the chain corresponds to 1 to 21; that stretch reads MEPGDAARPGSGRATGAPPPR. Residues 22–42 traverse the membrane as a helical segment; sequence LLLLPLLLGWGLRVAAAASAS. Topologically, residues 43-70 are lumenal; sequence SSGAAAEDSSAMEELATEKEAEESHRQD. A helical transmembrane segment spans residues 71-91; it reads SVSLLTFILLLTLTILTIWLF. Over 92 to 95 the chain is Cytoplasmic; sequence KHRR. Residues 96 to 116 traverse the membrane as a helical segment; it reads VRFLHETGLAMIYGLIVGVIL. Topologically, residues 117-175 are lumenal; sequence RYGTPATSGRDKSLSCTQEDRAFSTLLVNVSGKFFEYTLKGEISPGKINSVEQNDMLRK. A glycan (N-linked (GlcNAc...) asparagine) is linked at asparagine 145. A helical transmembrane segment spans residues 176 to 196; sequence VTFDPEVFFNILLPPIIFHAG. The Cytoplasmic portion of the chain corresponds to 197–210; that stretch reads YSLKKRHFFRNLGS. A helical transmembrane segment spans residues 211 to 231; it reads ILAYAFLGTAVSCFIIGNLMY. The Lumenal portion of the chain corresponds to 232 to 251; it reads GVVKLMKIMGQLSDKFYYTD. A helical transmembrane segment spans residues 252 to 272; that stretch reads CLFFGAIISATDPVTVLAIFN. Residues 273–277 are Cytoplasmic-facing; sequence ELHAD. The helical transmembrane segment at 278–298 threads the bilayer; that stretch reads VDLYALLFGESVLNDAVAIVL. Residues 299-322 are Lumenal-facing; that stretch reads SSSIVAYQPAGLNTHAFDAAAFFK. Residues 323–343 traverse the membrane as a helical segment; that stretch reads SVGIFLGIFSGSFTMGAVTGV. Topologically, residues 344-349 are cytoplasmic; it reads NANVTK. 2 consecutive transmembrane segments (helical) span residues 350-370 and 371-391; these read FTKLHCFPLLETALFFLMSWS and TFLLAEACGFTGVVAVLFCGI. At 392–414 the chain is on the cytoplasmic side; sequence TQAHYTYNNLSVESRSRTKQLFE. Residues 415–435 traverse the membrane as a helical segment; sequence VLHFLAENFIFSYMGLALFTF. Residues 436–442 lie on the Lumenal side of the membrane; that stretch reads QKHVFSP. A helical membrane pass occupies residues 443–463; sequence IFIIGAFVAIFLGRAAHIYPL. At 464-474 the chain is on the cytoplasmic side; that stretch reads SFFLNLGRRHK. Residues 475–497 form a helical membrane-spanning segment; it reads IGWNFQHMMMFSGLRGAMAFALA. Topologically, residues 498 to 513 are lumenal; the sequence is IRDTASYARQMMFTTT. The helical transmembrane segment at 514-534 threads the bilayer; sequence LLIVFFTVWIIGGGTTPMLSW. Required for trans-Golgi network localization regions lie at residues 533 to 559 and 563 to 568; these read SWLNIRVGVEEPSEEDQNEHHWQYFRV and PDQDPP. The Cytoplasmic portion of the chain corresponds to 535-725; it reads LNIRVGVEEP…RLVFPLEDNA (191 aa). Serine 545 carries the post-translational modification Phosphoserine. Disordered regions lie at residues 567–590 and 669–714; these read PPPNNDSFQVLQGDGPDSARGNRT and TVTA…SSRG. Positions 675-684 are enriched in low complexity; sequence SSSSHTASTS. The segment covering 687–704 has biased composition (basic and acidic residues); that stretch reads GSRRTKSSSEEVLERDLG.

It belongs to the monovalent cation:proton antiporter 1 (CPA1) transporter (TC 2.A.36) family. As to quaternary structure, interacts with SCAMP1, SCAMP2 and SCAMP5; may participate in its shuttling from trans-Golgi network to recycling endosomes. N-glycosylated. Ubiquitously expressed.

The protein resides in the golgi apparatus. It localises to the trans-Golgi network membrane. It is found in the recycling endosome membrane. Its subcellular location is the cell membrane. It carries out the reaction Na(+)(in) + H(+)(out) = Na(+)(out) + H(+)(in). The enzyme catalyses K(+)(in) + H(+)(out) = K(+)(out) + H(+)(in). Inhibited by benzamil and quinine but not by amiloride. Golgi Na(+), K(+)/(H+) antiporter. Mediates the electoneutral influx of Na(+) or K(+) in exchange for H(+). May contribute to the regulation of Golgi apparatus volume and pH. This is Sodium/hydrogen exchanger 7 (SLC9A7) from Homo sapiens (Human).